Consider the following 226-residue polypeptide: Transcription factor bHLH115 (226 aa).

In terms of domain architecture, bHLH spans 66–117 (TGSNSKACREKQRRDRLNDKFTELSSVLEPGRTPKTDKVAIINDAIRMVNQA).

As to quaternary structure, homodimer. Interacts with BTS and BHLH47/PYE.

It is found in the nucleus. In Arabidopsis thaliana (Mouse-ear cress), this protein is Transcription factor bHLH115 (BHLH115).